The primary structure comprises 587 residues: Arginine--tRNA ligase (587 aa).

The 'HIGH' region signature appears at 127–137; the sequence is PNLAKEMHVGH.

Belongs to the class-I aminoacyl-tRNA synthetase family. As to quaternary structure, monomer.

The protein localises to the cytoplasm. The catalysed reaction is tRNA(Arg) + L-arginine + ATP = L-arginyl-tRNA(Arg) + AMP + diphosphate. The chain is Arginine--tRNA ligase from Pseudomonas aeruginosa (strain LESB58).